The chain runs to 331 residues: Myc-associated zinc finger protein (331 aa).

2 disordered regions span residues 46–65 (AQSPFQAAPAPPPTPQAPAA) and 108–131 (TVDTAALKQPPAPPPPPPAVSAPA). Residues 117–127 (PPAPPPPPPAV) are compositionally biased toward pro residues. C2H2-type zinc fingers lie at residues 177–199 (YICALCAKEFKNGYNLRRHEAIH), 266–288 (HACEMCGKAFRDVYHLNRHKLSH), 294–316 (YQCPVCQQRFKRKDRMSYHVRSH), and 324–331 (YNCSHCGK).

Interacts with BPTF. Ubiquitously expressed.

Its subcellular location is the nucleus. Transcriptional regulator. Acts as a transcriptional activator that binds to purine-rich GAGA sites found in the promoter of many genes including insulin I and II and islet amyloid polypeptide. In Mesocricetus auratus (Golden hamster), this protein is Myc-associated zinc finger protein (MAZ).